Reading from the N-terminus, the 436-residue chain is MNAPDSPNALAARSELTDLMQRMGSGAKVASAHMARASAAVKNWALSKLATLLRQNVKALDNANQRDLARAQAAGLAGPLLDRLRLSPKDIETVALGCEQLAAMPDVIGEIIGMKEQPSGIRVGQMRVPIGVFGMIYESRPNVTIEAASLAIKSGNACILRGGSEAIESNKALASLVQQALLDAGLPADAVQLVPTTDREAVGLLIAMPQYVDVIIPRGGKGLIERISREAKVPVIKHLDGNCHVYVDDPCDIDMAVRVADNAKTQKYSPCNASEGLLVARGVAAGFLPKIGAVYAAKGVEMRCDAEARALLAGVAGANLQPVSEQDWYEEYLAPIISIKVVAGIDEAIAHINQYSSHHTDAILTRDHMHAQRFLREVDSASVMVNASTRFADGFEFGLGAEIGISTDKFHARGPVGIEGLTSLKYVVLGNGEVRT.

The protein belongs to the gamma-glutamyl phosphate reductase family.

It localises to the cytoplasm. It catalyses the reaction L-glutamate 5-semialdehyde + phosphate + NADP(+) = L-glutamyl 5-phosphate + NADPH + H(+). The protein operates within amino-acid biosynthesis; L-proline biosynthesis; L-glutamate 5-semialdehyde from L-glutamate: step 2/2. Catalyzes the NADPH-dependent reduction of L-glutamate 5-phosphate into L-glutamate 5-semialdehyde and phosphate. The product spontaneously undergoes cyclization to form 1-pyrroline-5-carboxylate. This chain is Gamma-glutamyl phosphate reductase, found in Polaromonas sp. (strain JS666 / ATCC BAA-500).